A 262-amino-acid chain; its full sequence is Small ribosomal subunit protein uS2 (262 aa).

Residues 228–262 (VSNEEVAAEQNIDLDESKEATEAETTEENTSVESN) form a disordered region.

This sequence belongs to the universal ribosomal protein uS2 family.

The polypeptide is Small ribosomal subunit protein uS2 (Staphylococcus saprophyticus subsp. saprophyticus (strain ATCC 15305 / DSM 20229 / NCIMB 8711 / NCTC 7292 / S-41)).